The following is a 44-amino-acid chain: Defensin ARD1 (44 aa).

Disulfide bonds link C7-C32, C18-C40, and C22-C42.

It is found in the secreted. Its function is as follows. Possesses potent anti-fungal activity. This Archaeoprepona demophon (One-spotted leafwing butterfly) protein is Defensin ARD1.